We begin with the raw amino-acid sequence, 184 residues long: ADP-ribosylation factor-like protein 2 (184 aa).

The N-myristoyl glycine moiety is linked to residue Gly2. GTP-binding positions include 23 to 30 (GLDNAGKT), 66 to 70 (DVGGQ), and 125 to 128 (NKQD).

It belongs to the small GTPase superfamily. Arf family. As to expression, ubiquitously expressed.

In terms of biological role, GTP-binding protein involved in protein trafficking; may modulate vesicle budding and uncoating within the Golgi apparatus. The sequence is that of ADP-ribosylation factor-like protein 2 (Arl2) from Drosophila melanogaster (Fruit fly).